The sequence spans 114 residues: NADH-ubiquinone oxidoreductase chain 3 (114 aa).

The next 3 helical transmembrane spans lie at 1–21, 55–75, and 85–105; these read MIFYLHITIFLVVCLLMMLFF, FFFVGIVFLIFDVEIVVILPF, and MFVFSFTFINFLIVLGLLYEF.

This sequence belongs to the complex I subunit 3 family.

The protein localises to the mitochondrion membrane. The enzyme catalyses a ubiquinone + NADH + 5 H(+)(in) = a ubiquinol + NAD(+) + 4 H(+)(out). Its function is as follows. Core subunit of the mitochondrial membrane respiratory chain NADH dehydrogenase (Complex I) that is believed to belong to the minimal assembly required for catalysis. Complex I functions in the transfer of electrons from NADH to the respiratory chain. The immediate electron acceptor for the enzyme is believed to be ubiquinone. This is NADH-ubiquinone oxidoreductase chain 3 (ND3) from Rhipicephalus sanguineus (Brown dog tick).